Here is a 322-residue protein sequence, read N- to C-terminus: Ribosomal lysine N-methyltransferase 5 (322 aa).

S-adenosyl-L-methionine-binding positions include tryptophan 92, glycine 141–glycine 143, aspartate 163, tryptophan 214, and methionine 242.

It belongs to the class I-like SAM-binding methyltransferase superfamily. RKM5 family.

In terms of biological role, S-adenosyl-L-methionine-dependent protein-lysine N-methyltransferase that methylates 60S ribosomal protein L1. The polypeptide is Ribosomal lysine N-methyltransferase 5 (RKM5) (Kluyveromyces lactis (strain ATCC 8585 / CBS 2359 / DSM 70799 / NBRC 1267 / NRRL Y-1140 / WM37) (Yeast)).